A 454-amino-acid polypeptide reads, in one-letter code: Tetrahydroanabasine acetyltransferase (454 aa).

Catalysis depends on proton acceptor residues His164 and Asp389.

This sequence belongs to the plant acyltransferase family. As to quaternary structure, monomer.

It carries out the reaction tetrahydroanabasine + acetyl-CoA = ammodendrine + CoA. It functions in the pathway alkaloid biosynthesis. Functionally, tetrahydroanabasine acetyltransferase involved in the accumulation of quinolizidine type antinutritional alkaloids (QAs) natural products. QAs impart a bitter taste to plants, acting as repellents and toxicants for herbivores and predators, and possess a variety of pharmacological effects, including sedative, anticonvulsant, anti-inflammatory, antiviral, antitumor, antipyretic, anti-hepatitis B, antifibrotic, antiallergic, antidiarrheal, analgesic and antimicrobial activities. Mediates the conversion of tetrahydroanabasine into ammodendrine. This is Tetrahydroanabasine acetyltransferase from Lupinus albus (White lupine).